A 134-amino-acid polypeptide reads, in one-letter code: Small ribosomal subunit protein uS11 (134 aa).

It belongs to the universal ribosomal protein uS11 family. In terms of assembly, part of the 30S ribosomal subunit. Interacts with proteins S7 and S18. Binds to IF-3.

Functionally, located on the platform of the 30S subunit, it bridges several disparate RNA helices of the 16S rRNA. Forms part of the Shine-Dalgarno cleft in the 70S ribosome. This is Small ribosomal subunit protein uS11 from Leptothrix cholodnii (strain ATCC 51168 / LMG 8142 / SP-6) (Leptothrix discophora (strain SP-6)).